Consider the following 91-residue polypeptide: UPF0250 protein BP0104 (91 aa).

Belongs to the UPF0250 family.

The sequence is that of UPF0250 protein BP0104 from Bordetella pertussis (strain Tohama I / ATCC BAA-589 / NCTC 13251).